A 184-amino-acid polypeptide reads, in one-letter code: Probable RNA 2'-phosphotransferase (184 aa).

The protein belongs to the KptA/TPT1 family.

Its function is as follows. Removes the 2'-phosphate from RNA via an intermediate in which the phosphate is ADP-ribosylated by NAD followed by a presumed transesterification to release the RNA and generate ADP-ribose 1''-2''-cyclic phosphate (APPR&gt;P). May function as an ADP-ribosylase. The protein is Probable RNA 2'-phosphotransferase of Rhodopirellula baltica (strain DSM 10527 / NCIMB 13988 / SH1).